The sequence spans 464 residues: Meiotic plaque component protein 54 (464 aa).

Positions 71 to 102 (SISTTITPNKSSLKSPRGKRASKNSFDNETKL) are disordered. 3 coiled-coil regions span residues 99 to 119 (ETKL…VNRC), 156 to 193 (KAEC…DHLL), and 231 to 365 (SINS…LQTQ).

As to quaternary structure, interacts directly with SPO21/MPC70, NUD1, SPO74 and SPC42. Probable component of a spindle pole body (SPB) complex composed of ADY3, SSP1, DON1, MPC54, SPO21/MPC70, NUD1 and CNM67.

Its subcellular location is the prospore membrane. It is found in the cytoplasm. The protein resides in the cytoskeleton. The protein localises to the microtubule organizing center. It localises to the spindle pole body. Its subcellular location is the spindle pole. Functionally, involved in the pathway that organizes the shaping and sizing of the prospore membrane (PSM) during sporulation. The chain is Meiotic plaque component protein 54 (MPC54) from Saccharomyces cerevisiae (strain ATCC 204508 / S288c) (Baker's yeast).